Reading from the N-terminus, the 337-residue chain is uncharacterized protein (337 aa).

Over 1–10 (MKLKINIRPN) the chain is Cytoplasmic. Residues 11–31 (EIIFLICIVVIFSFSYTLTYF) form a helical membrane-spanning segment. Topologically, residues 32–100 (DSPIFKEHYI…LEKLFSFSDN (69 aa)) are extracellular. A helical membrane pass occupies residues 101–121 (ILIVLIIVQVIVGFLIFLLSV). The Cytoplasmic segment spans residues 122 to 197 (EKLSKCNYQL…KILIIKKKRD (76 aa)). A compositionally biased stretch (low complexity) spans 148–167 (NNNNEDINNNNNNNNNNNNK). Positions 148–179 (NNNNEDINNNNNNNNNNNNKNKNDERNNEEIE) are disordered. The chain crosses the membrane as a helical span at residues 198-218 (ILLAIIIFFLVLLGVLTIIYV). At 219 to 285 (SFIPLNIRKA…SWSLDSGLFN (67 aa)) the chain is on the extracellular side. Residues 286–306 (VKIVFFSTILIEFLTGCLILL) form a helical membrane-spanning segment. The Cytoplasmic segment spans residues 307 to 337 (MKFKKDPNIVPLTKPSIASPTQIPHLFCIAK).

The protein resides in the membrane. This is an uncharacterized protein from Dictyostelium discoideum (Social amoeba).